Reading from the N-terminus, the 238-residue chain is Small ribosomal subunit protein uS2 (238 aa).

Belongs to the universal ribosomal protein uS2 family.

In Synechococcus sp. (strain CC9311), this protein is Small ribosomal subunit protein uS2.